The sequence spans 645 residues: Phosphomethylpyrimidine synthase (645 aa).

Substrate is bound by residues Asn-235, Met-264, Tyr-293, His-329, 349–351, 390–393, and Glu-429; these read SRG and DGLR. Position 433 (His-433) interacts with Zn(2+). Position 456 (Tyr-456) interacts with substrate. His-497 is a binding site for Zn(2+). 3 residues coordinate [4Fe-4S] cluster: Cys-577, Cys-580, and Cys-585.

The protein belongs to the ThiC family. In terms of assembly, homodimer. [4Fe-4S] cluster serves as cofactor.

The enzyme catalyses 5-amino-1-(5-phospho-beta-D-ribosyl)imidazole + S-adenosyl-L-methionine = 4-amino-2-methyl-5-(phosphooxymethyl)pyrimidine + CO + 5'-deoxyadenosine + formate + L-methionine + 3 H(+). Its pathway is cofactor biosynthesis; thiamine diphosphate biosynthesis. Its function is as follows. Catalyzes the synthesis of the hydroxymethylpyrimidine phosphate (HMP-P) moiety of thiamine from aminoimidazole ribotide (AIR) in a radical S-adenosyl-L-methionine (SAM)-dependent reaction. This chain is Phosphomethylpyrimidine synthase, found in Vibrio cholerae serotype O1 (strain ATCC 39541 / Classical Ogawa 395 / O395).